Here is a 421-residue protein sequence, read N- to C-terminus: Enolase (421 aa).

The active-site Proton donor is the glutamate 207. Mg(2+) is bound by residues aspartate 244, glutamate 285, and aspartate 312. The active-site Proton acceptor is the lysine 337. Positions 337, 366, 367, and 388 each coordinate (2R)-2-phosphoglycerate.

Belongs to the enolase family. Requires Mg(2+) as cofactor.

Its subcellular location is the cytoplasm. It is found in the secreted. It localises to the cell surface. The enzyme catalyses (2R)-2-phosphoglycerate = phosphoenolpyruvate + H2O. Its pathway is carbohydrate degradation; glycolysis; pyruvate from D-glyceraldehyde 3-phosphate: step 4/5. Catalyzes the reversible conversion of 2-phosphoglycerate (2-PG) into phosphoenolpyruvate (PEP). It is essential for the degradation of carbohydrates via glycolysis. This Ehrlichia ruminantium (strain Gardel) protein is Enolase.